A 44-amino-acid chain; its full sequence is Somatoliberin (44 aa).

The residue at position 44 (leucine 44) is a Leucine amide.

It belongs to the glucagon family.

The protein localises to the secreted. In terms of biological role, GRF is released by the hypothalamus and acts on the adenohypophyse to stimulate the secretion of growth hormone. The polypeptide is Somatoliberin (GHRH) (Ovis aries (Sheep)).